A 903-amino-acid chain; its full sequence is KAT8 regulatory NSL complex subunit 1-like protein (903 aa).

Disordered regions lie at residues 319 to 343 (DSDA…DECN), 419 to 441 (MPKS…PSSP), and 652 to 676 (TECT…HRSE). Composition is skewed to polar residues over residues 423–441 (PQGT…PSSP) and 652–661 (TECTSSYSPD). The 115-residue stretch at 748 to 862 (EIITPSWKEV…ESPKGKTIHW (115 aa)) folds into the PEHE domain.

The protein is KAT8 regulatory NSL complex subunit 1-like protein (kansl1l) of Xenopus tropicalis (Western clawed frog).